We begin with the raw amino-acid sequence, 338 residues long: Glyceraldehyde-3-phosphate dehydrogenase, cytosolic (338 aa).

Residues 13–14 (RI), D35, and R82 each bind NAD(+). Residues 153-155 (SCT), T184, 213-214 (TG), and R236 contribute to the D-glyceraldehyde 3-phosphate site. C154 (nucleophile) is an active-site residue. Position 318 (N318) interacts with NAD(+).

Belongs to the glyceraldehyde-3-phosphate dehydrogenase family. As to quaternary structure, homotetramer.

Its subcellular location is the cytoplasm. The enzyme catalyses D-glyceraldehyde 3-phosphate + phosphate + NAD(+) = (2R)-3-phospho-glyceroyl phosphate + NADH + H(+). It participates in carbohydrate degradation; glycolysis; pyruvate from D-glyceraldehyde 3-phosphate: step 1/5. Functionally, key enzyme in glycolysis that catalyzes the first step of the pathway by converting D-glyceraldehyde 3-phosphate (G3P) into 3-phospho-D-glyceroyl phosphate. Essential for the maintenance of cellular ATP levels and carbohydrate metabolism. This Dianthus caryophyllus (Carnation) protein is Glyceraldehyde-3-phosphate dehydrogenase, cytosolic (GAPC).